Consider the following 64-residue polypeptide: Large ribosomal subunit protein eL37 (64 aa).

4 residues coordinate Zn(2+): C20, C23, C35, and C38. Residues C20–C38 form a C4-type zinc finger.

Belongs to the eukaryotic ribosomal protein eL37 family. It depends on Zn(2+) as a cofactor.

In terms of biological role, binds to the 23S rRNA. The protein is Large ribosomal subunit protein eL37 of Methanococcus vannielii (strain ATCC 35089 / DSM 1224 / JCM 13029 / OCM 148 / SB).